Here is a 473-residue protein sequence, read N- to C-terminus: Photosystem II CP43 reaction center protein (473 aa).

A propeptide spanning residues 1-14 (MKTLYSLRRFYPVE) is cleaved from the precursor. N-acetylthreonine is present on Thr15. Phosphothreonine is present on Thr15. Helical transmembrane passes span 69 to 93 (LFEV…PHLA), 134 to 155 (LIGP…KDKN), 178 to 200 (KALY…RKIT), 255 to 275 (KPFA…LSYS), and 291 to 312 (WFNN…ASQA). Residue Glu367 participates in [CaMn4O5] cluster binding. A helical transmembrane segment spans residues 447–471 (RARAAAAGFEKGIDRDTEPVLSMTP).

It belongs to the PsbB/PsbC family. PsbC subfamily. PSII is composed of 1 copy each of membrane proteins PsbA, PsbB, PsbC, PsbD, PsbE, PsbF, PsbH, PsbI, PsbJ, PsbK, PsbL, PsbM, PsbT, PsbX, PsbY, PsbZ, Psb30/Ycf12, at least 3 peripheral proteins of the oxygen-evolving complex and a large number of cofactors. It forms dimeric complexes. Binds multiple chlorophylls and provides some of the ligands for the Ca-4Mn-5O cluster of the oxygen-evolving complex. It may also provide a ligand for a Cl- that is required for oxygen evolution. PSII binds additional chlorophylls, carotenoids and specific lipids. is required as a cofactor.

The protein resides in the plastid. It is found in the chloroplast thylakoid membrane. One of the components of the core complex of photosystem II (PSII). It binds chlorophyll and helps catalyze the primary light-induced photochemical processes of PSII. PSII is a light-driven water:plastoquinone oxidoreductase, using light energy to abstract electrons from H(2)O, generating O(2) and a proton gradient subsequently used for ATP formation. This Angiopteris evecta (Mule's foot fern) protein is Photosystem II CP43 reaction center protein.